Reading from the N-terminus, the 367-residue chain is Tetraprenyl-beta-curcumene synthase (367 aa).

It belongs to the large terpene synthase family.

The catalysed reaction is all-trans-heptaprenyl diphosphate = (R)-tetraprenyl-beta-curcumene + diphosphate. Its function is as follows. Catalyzes the transformation of a linear C35 prenyl diphosphate chain to form tetraprenyl-beta-curcumene. In Bacillus subtilis (strain 168), this protein is Tetraprenyl-beta-curcumene synthase (ytpB).